Consider the following 1090-residue polypeptide: Vinculin (1090 aa).

Repeat copies occupy residues 339–446 (DADN…SQNS) and 455–561 (QNAQ…DLGD). Residues 339 to 561 (DADNVTVMRK…LKNALRDLGD (223 aa)) are 2 X repeats. Disordered stretches follow at residues 811 to 842 (GVPM…SQVI) and 864 to 895 (DIPA…EEET). The segment covering 817 to 830 (GRHSSYQESISRAS) has biased composition (polar residues). Pro residues predominate over residues 866–887 (PAPPRPPPPVELSPPPRPPPPP).

It belongs to the vinculin/alpha-catenin family. May interact with sorb-1. As to expression, expressed in gonadal sheath cells and the spermatheca. Expressed in body wall muscles.

The protein resides in the cytoplasm. The protein localises to the cytoskeleton. It localises to the cell junction. Its subcellular location is the adherens junction. It is found in the cell membrane. The protein resides in the focal adhesion. Involved in cell adhesion. May be involved in the attachment of the actin-based microfilaments to the plasma membrane. Involved in ovulation. This chain is Vinculin, found in Caenorhabditis elegans.